A 284-amino-acid polypeptide reads, in one-letter code: 2-dehydro-3-deoxyphosphooctonate aldolase (284 aa).

Belongs to the KdsA family.

Its subcellular location is the cytoplasm. It catalyses the reaction D-arabinose 5-phosphate + phosphoenolpyruvate + H2O = 3-deoxy-alpha-D-manno-2-octulosonate-8-phosphate + phosphate. The protein operates within carbohydrate biosynthesis; 3-deoxy-D-manno-octulosonate biosynthesis; 3-deoxy-D-manno-octulosonate from D-ribulose 5-phosphate: step 2/3. Its pathway is bacterial outer membrane biogenesis; lipopolysaccharide biosynthesis. This is 2-dehydro-3-deoxyphosphooctonate aldolase from Sodalis glossinidius (strain morsitans).